The sequence spans 504 residues: L-arabinose isomerase (504 aa).

4 residues coordinate Mn(2+): E308, E335, H352, and H452.

This sequence belongs to the arabinose isomerase family. It depends on Mn(2+) as a cofactor.

It catalyses the reaction beta-L-arabinopyranose = L-ribulose. The protein operates within carbohydrate degradation; L-arabinose degradation via L-ribulose; D-xylulose 5-phosphate from L-arabinose (bacterial route): step 1/3. Functionally, catalyzes the conversion of L-arabinose to L-ribulose. The polypeptide is L-arabinose isomerase (Bifidobacterium adolescentis (strain ATCC 15703 / DSM 20083 / NCTC 11814 / E194a)).